Here is an 85-residue protein sequence, read N- to C-terminus: Large ribosomal subunit protein bL27 (85 aa).

Residues methionine 1–valine 23 are disordered.

It belongs to the bacterial ribosomal protein bL27 family.

The polypeptide is Large ribosomal subunit protein bL27 (Methylococcus capsulatus (strain ATCC 33009 / NCIMB 11132 / Bath)).